A 233-amino-acid chain; its full sequence is Orotidine 5'-phosphate decarboxylase (233 aa).

Substrate contacts are provided by residues Asp-11, Lys-34, 61-70 (DLKLHDIPNT), Thr-117, Arg-179, Gln-188, Gly-208, and Arg-209. Lys-63 functions as the Proton donor in the catalytic mechanism.

This sequence belongs to the OMP decarboxylase family. Type 1 subfamily. In terms of assembly, homodimer.

It catalyses the reaction orotidine 5'-phosphate + H(+) = UMP + CO2. Its pathway is pyrimidine metabolism; UMP biosynthesis via de novo pathway; UMP from orotate: step 2/2. Functionally, catalyzes the decarboxylation of orotidine 5'-monophosphate (OMP) to uridine 5'-monophosphate (UMP). The sequence is that of Orotidine 5'-phosphate decarboxylase from Streptococcus pneumoniae serotype 4 (strain ATCC BAA-334 / TIGR4).